The following is a 77-amino-acid chain: Translation initiation factor IF-1, chloroplastic (77 aa).

The 71-residue stretch at methionine 1–arginine 71 folds into the S1-like domain.

This sequence belongs to the IF-1 family. Component of the 30S ribosomal translation pre-initiation complex which assembles on the 30S ribosome in the order IF-2 and IF-3, IF-1 and N-formylmethionyl-tRNA(fMet); mRNA recruitment can occur at any time during PIC assembly.

Its subcellular location is the plastid. It is found in the chloroplast. Functionally, one of the essential components for the initiation of protein synthesis. Stabilizes the binding of IF-2 and IF-3 on the 30S subunit to which N-formylmethionyl-tRNA(fMet) subsequently binds. Helps modulate mRNA selection, yielding the 30S pre-initiation complex (PIC). Upon addition of the 50S ribosomal subunit IF-1, IF-2 and IF-3 are released leaving the mature 70S translation initiation complex. The sequence is that of Translation initiation factor IF-1, chloroplastic from Buxus microphylla (Littleleaf boxwood).